The following is a 375-amino-acid chain: MTPKLKLNTNSNWTKKTLGSLFELKKGEMLEKELLAPDGKYEYFNGGIKASGRTNEFNTFKNTISIIIGGSCGYVRLADKDYFCGQSSCTLTVLDPLEIDLKFAYYALKSQEEKITSLASGTTIKNIRLSDLKDLPIPLVKSIQDQRTIAHALSVFDLRIEHLNELIEVNRKLRDEYAHKLFTLDPDFLTHWNLHELHEQMGEISLGEVFHLKSGKYLKADERFEDGKFPYYGAGIESTSFVNEPNTKGDTLSMIANGYSIGNIRYHTIPWFNGTGGIAMEALKPNKTYVPFFYCALKYMQKDLKERFKRDESPFISLKLAGEIKVPFVKSFALQRKAGKIIYLLDKTLEECKEEAKSLISIRDNLLGKLFPTLS.

This sequence belongs to the type-I restriction system S methylase family. As to quaternary structure, the methyltransferase is composed of M and S polypeptides.

Functionally, the specificity (S) subunit of a type I methyltransferase (MTase); this subunit dictates DNA sequence specificity. The single R subunit has multiple frameshifts and is probably not expressed. The polypeptide is Putative type I specificity subunit S.MpnORF638P (Mycoplasma pneumoniae (strain ATCC 29342 / M129 / Subtype 1) (Mycoplasmoides pneumoniae)).